Here is a 393-residue protein sequence, read N- to C-terminus: Elongation factor Tu (393 aa).

The tr-type G domain maps to 10–203 (KPHVNIGTIG…AVDAFIPDPV (194 aa)). The tract at residues 19-26 (GHVDHGKT) is G1. 19–26 (GHVDHGKT) contacts GTP. Thr26 is a Mg(2+) binding site. The interval 60–64 (GITIS) is G2. The tract at residues 81–84 (DCPG) is G3. GTP is bound by residues 81-85 (DCPGH) and 136-139 (NKVD). The G4 stretch occupies residues 136–139 (NKVD). Positions 173–175 (SAL) are G5.

This sequence belongs to the TRAFAC class translation factor GTPase superfamily. Classic translation factor GTPase family. EF-Tu/EF-1A subfamily. Monomer.

The protein resides in the cytoplasm. It carries out the reaction GTP + H2O = GDP + phosphate + H(+). GTP hydrolase that promotes the GTP-dependent binding of aminoacyl-tRNA to the A-site of ribosomes during protein biosynthesis. This is Elongation factor Tu from Chlorobium chlorochromatii (strain CaD3).